Consider the following 199-residue polypeptide: Dephospho-CoA kinase (199 aa).

Residues 3–199 (TLGVTGGIGS…ELYWAVTGGQ (197 aa)) enclose the DPCK domain. 11 to 16 (GSGKTT) contacts ATP.

The protein belongs to the CoaE family.

It is found in the cytoplasm. It carries out the reaction 3'-dephospho-CoA + ATP = ADP + CoA + H(+). The protein operates within cofactor biosynthesis; coenzyme A biosynthesis; CoA from (R)-pantothenate: step 5/5. Its function is as follows. Catalyzes the phosphorylation of the 3'-hydroxyl group of dephosphocoenzyme A to form coenzyme A. This is Dephospho-CoA kinase from Salinibacter ruber (strain DSM 13855 / M31).